The chain runs to 152 residues: 3-hydroxyacyl-[acyl-carrier-protein] dehydratase FabZ (152 aa).

H58 is a catalytic residue.

The protein belongs to the thioester dehydratase family. FabZ subfamily.

The protein localises to the cytoplasm. The enzyme catalyses a (3R)-hydroxyacyl-[ACP] = a (2E)-enoyl-[ACP] + H2O. Its function is as follows. Involved in unsaturated fatty acids biosynthesis. Catalyzes the dehydration of short chain beta-hydroxyacyl-ACPs and long chain saturated and unsaturated beta-hydroxyacyl-ACPs. The sequence is that of 3-hydroxyacyl-[acyl-carrier-protein] dehydratase FabZ from Prochlorococcus marinus (strain MIT 9312).